Reading from the N-terminus, the 327-residue chain is tRNA dimethylallyltransferase (327 aa).

18-25 (GPTASGKT) is a binding site for ATP. A substrate-binding site is contributed by 20 to 25 (TASGKT). 3 interaction with substrate tRNA regions span residues 43 to 46 (DSAL), 167 to 171 (QRVQR), and 251 to 256 (RCVGYR).

This sequence belongs to the IPP transferase family. In terms of assembly, monomer. The cofactor is Mg(2+).

The enzyme catalyses adenosine(37) in tRNA + dimethylallyl diphosphate = N(6)-dimethylallyladenosine(37) in tRNA + diphosphate. Functionally, catalyzes the transfer of a dimethylallyl group onto the adenine at position 37 in tRNAs that read codons beginning with uridine, leading to the formation of N6-(dimethylallyl)adenosine (i(6)A). The chain is tRNA dimethylallyltransferase from Methylibium petroleiphilum (strain ATCC BAA-1232 / LMG 22953 / PM1).